Consider the following 466-residue polypeptide: Hepatocyte nuclear factor 3-alpha (466 aa).

Positions 169–260 (AKPPYSYISL…GNMFENGCYL (92 aa)) form a DNA-binding region, fork-head. Residues 251-288 (GNMFENGCYLRRQKRFKCEKQPGAGGGSGGGGSKGVPE) are essential for DNA binding. The disordered stretch occupies residues 269 to 358 (EKQPGAGGGS…ASSSAPPISS (90 aa)). The span at 273–284 (GAGGGSGGGGSK) shows a compositional bias: gly residues. Ser303 and Ser327 each carry phosphoserine. 2 stretches are compositionally biased toward low complexity: residues 318–328 (GAPAPGPAASP) and 344–358 (ELKS…PISS).

Binds DNA as a monomer. Interacts with FOXA2. Interacts with NKX2-1. Interacts with HDAC7. Interacts with the histone H3-H4 heterodimer. Associates with nucleosomes containing histone H2A. Interacts with AR. Interacts with NR0B2. As to expression, liver.

It is found in the nucleus. Transcription factor that is involved in embryonic development, establishment of tissue-specific gene expression and regulation of gene expression in differentiated tissues. Is thought to act as a 'pioneer' factor opening the compacted chromatin for other proteins through interactions with nucleosomal core histones and thereby replacing linker histones at target enhancer and/or promoter sites. Binds DNA with the consensus sequence 5'-[AC]A[AT]T[AG]TT[GT][AG][CT]T[CT]-3'. Proposed to play a role in translating the epigenetic signatures into cell type-specific enhancer-driven transcriptional programs. Involved in glucose homeostasis; activates the GCG promoter. Involved in the development of multiple endoderm-derived organ systems such as the liver, pancreas, lungs and prostate; FOXA1 and FOXA2 seem to have at least in part redundant roles. Modulates the transcriptional activity of nuclear hormone receptors. Is required for maximal gene activation mediated by AR in the prostate. Negatively regulates AR transactivation via competition with coactivators such as NCOA2. Is involved in ESR1-mediated transcription. Involved in regulation of apoptosis. Involved in cell cycle regulation. Originally described as a transcription activator for a number of liver genes such as AFP, albumin, tyrosine aminotransferase, PEPCK, etc. Interacts with the cis-acting regulatory regions of these genes. The sequence is that of Hepatocyte nuclear factor 3-alpha (Foxa1) from Rattus norvegicus (Rat).